The following is a 393-amino-acid chain: 4-hydroxyphenylpyruvate dioxygenase (393 aa).

Thr-2 carries the N-acetylthreonine modification. VOC domains are found at residues 18 to 149 (HFHS…LVEK) and 180 to 338 (IIDH…IFTK). The residue at position 132 (Lys-132) is an N6-succinyllysine. His-183 contributes to the Fe cation binding site. 3 positions are modified to phosphoserine: Ser-211, Ser-226, and Ser-250. Fe cation is bound by residues His-266 and Glu-349.

Belongs to the 4HPPD family. In terms of assembly, homodimer. Requires Fe cation as cofactor.

The protein resides in the cytoplasm. Its subcellular location is the endoplasmic reticulum membrane. The protein localises to the golgi apparatus membrane. The enzyme catalyses 3-(4-hydroxyphenyl)pyruvate + O2 = homogentisate + CO2. It participates in amino-acid degradation; L-phenylalanine degradation; acetoacetate and fumarate from L-phenylalanine: step 3/6. Catalyzes the conversion of 4-hydroxyphenylpyruvic acid to homogentisic acid, one of the steps in tyrosine catabolism. This Bos taurus (Bovine) protein is 4-hydroxyphenylpyruvate dioxygenase (HPD).